We begin with the raw amino-acid sequence, 56 residues long: Putative zinc-binding protein YnfU (56 aa).

Positions 19, 22, 41, and 44 each coordinate Zn(2+).

Requires Zn(2+) as cofactor.

The sequence is that of Putative zinc-binding protein YnfU from Escherichia coli (strain K12).